The chain runs to 95 residues: uncharacterized protein (95 aa).

A coiled-coil region spans residues 14–50 (KMEQKLQEQLDGLLEKYTELLLGETNDELKEEVKQWI).

This is an uncharacterized protein from Bacillus subtilis (strain 168).